Consider the following 60-residue polypeptide: UPF0434 protein Rfer_3156 (60 aa).

The protein belongs to the UPF0434 family.

The sequence is that of UPF0434 protein Rfer_3156 from Albidiferax ferrireducens (strain ATCC BAA-621 / DSM 15236 / T118) (Rhodoferax ferrireducens).